The following is an 89-amino-acid chain: U-scoloptoxin(11)-Sm4a (89 aa).

The signal sequence occupies residues 1–17 (MFFKLVLVSAVAIQALS).

It belongs to the scoloptoxin-11 family. Contains 3 disulfide bonds. Expressed by the venom gland.

It localises to the secreted. This Scolopendra morsitans (Tanzanian blue ringleg centipede) protein is U-scoloptoxin(11)-Sm4a.